A 258-amino-acid chain; its full sequence is Large ribosomal subunit protein bL19m (258 aa).

A disordered region spans residues 235 to 258 (SKGLTGGVGGGGGKQKGQESKKKN). A compositionally biased stretch (gly residues) spans 238-249 (LTGGVGGGGGKQ).

The protein belongs to the bacterial ribosomal protein bL19 family. Component of the mitochondrial large ribosomal subunit (mt-LSU). Mature N.crassa 74S mitochondrial ribosomes consist of a small (37S) and a large (54S) subunit. The 37S small subunit contains a 16S ribosomal RNA (16S mt-rRNA) and 32 different proteins. The 54S large subunit contains a 23S rRNA (23S mt-rRNA) and 42 different proteins.

The protein localises to the mitochondrion. In terms of biological role, component of the mitochondrial ribosome (mitoribosome), a dedicated translation machinery responsible for the synthesis of mitochondrial genome-encoded proteins, including at least some of the essential transmembrane subunits of the mitochondrial respiratory chain. The mitoribosomes are attached to the mitochondrial inner membrane and translation products are cotranslationally integrated into the membrane. The protein is Large ribosomal subunit protein bL19m (img1) of Neurospora crassa (strain ATCC 24698 / 74-OR23-1A / CBS 708.71 / DSM 1257 / FGSC 987).